The primary structure comprises 389 residues: Globin-like protein 6 (389 aa).

Positions 1 to 15 (MGNQSTKSTHGTTRV) are enriched in polar residues. Disordered stretches follow at residues 1-38 (MGNQ…RSAS), 96-123 (RTSK…SVDS), and 143-185 (TVSS…SSNP). Positions 16 to 25 (SHSKSAHHNS) are enriched in basic residues. A Globin domain is found at 196–347 (HLTQPQILFV…VTEQLKEGFQ (152 aa)). His-254 and His-286 together coordinate heme b. Residues 367–389 (SSFEISTKTKQSDMKRFHTLDNM) are disordered. The span at 376–389 (KQSDMKRFHTLDNM) shows a compositional bias: basic and acidic residues.

Belongs to the globin family. In terms of tissue distribution, expressed in the head and tail neurons and nerve cord.

Its function is as follows. May play a role as physiological sensor for oxygen via redox signaling and/or electron transport. The sequence is that of Globin-like protein 6 from Caenorhabditis elegans.